The following is a 171-amino-acid chain: 16S rRNA aminocarboxypropyltransferase (171 aa).

S-adenosyl-L-methionine is bound by residues Thr-17, Leu-67, Leu-90, and Thr-109.

This sequence belongs to the TDD superfamily. TSR3 family.

It localises to the cytoplasm. It carries out the reaction an N(1)-methylpseudouridine in rRNA + S-adenosyl-L-methionine = N(1)-methyl-N(3)-[(3S)-3-amino-3-carboxypropyl]pseudouridine in rRNA + S-methyl-5'-thioadenosine + H(+). In terms of biological role, aminocarboxypropyltransferase that catalyzes the aminocarboxypropyl transfer on pseudouridine corresponding to position 914 in M.jannaschii 16S rRNA. It constitutes the last step in biosynthesis of the hypermodified N1-methyl-N3-(3-amino-3-carboxypropyl) pseudouridine (m1acp3-Psi). The sequence is that of 16S rRNA aminocarboxypropyltransferase from Methanobrevibacter smithii (strain ATCC 35061 / DSM 861 / OCM 144 / PS).